Consider the following 191-residue polypeptide: Cell division protein SepF (191 aa).

Over residues 157 to 178 (YLNESPAQPVQTTTSFGRTATP) the composition is skewed to polar residues. The interval 157–191 (YLNESPAQPVQTTTSFGRTATPTPAWGTDSRYAAQ) is disordered.

The protein belongs to the SepF family. Homodimer. Interacts with FtsZ.

Its subcellular location is the cytoplasm. Functionally, cell division protein that is part of the divisome complex and is recruited early to the Z-ring. Probably stimulates Z-ring formation, perhaps through the cross-linking of FtsZ protofilaments. Its function overlaps with FtsA. The sequence is that of Cell division protein SepF from Synechococcus elongatus (strain ATCC 33912 / PCC 7942 / FACHB-805) (Anacystis nidulans R2).